Consider the following 66-residue polypeptide: Beta-defensin 107A (66 aa).

The N-terminal stretch at 1-22 (MKIFFFIFAALILLAQIFQART) is a signal peptide. 2 cysteine pairs are disulfide-bonded: Cys-37–Cys-51 and Cys-41–Cys-60.

Belongs to the beta-defensin family.

It is found in the secreted. In terms of biological role, has antibacterial activity. In Macaca fascicularis (Crab-eating macaque), this protein is Beta-defensin 107A (DEFB107A).